A 174-amino-acid chain; its full sequence is Protein-lysine myristoyltransferase HlyC (174 aa).

Active-site residues include histidine 23 and aspartate 92. Position 151 (histidine 151) interacts with heme.

Belongs to the RTX toxin acyltransferase family. In terms of assembly, monomer. In terms of processing, proteolytically cleaved by the protease systems ClpAP, ClpXP and FtsH, leading to its degradation.

The protein localises to the cytoplasm. It catalyses the reaction tetradecanoyl-[ACP] + L-lysyl-[protein] = N(6)-tetradecanoyl-L-lysyl-[protein] + holo-[ACP] + H(+). With respect to regulation, the acyltransferase activity is inhibited by heme. Protein-lysine myristoyltransferase that catalyzes myristoylation of the protoxin (HlyA) at two internal lysine residues, thereby converting it to the active toxin. The protein is Protein-lysine myristoyltransferase HlyC of Escherichia coli.